Consider the following 821-residue polypeptide: Frameshifted structural polyprotein (821 aa).

The segment at 1 to 106 (MNRGFFNMLG…KPKPGKRQRM (106 aa)) is disordered. A compositionally biased stretch (polar residues) spans 38-49 (LASQIQQLTTAV). A compositionally biased stretch (basic residues) spans 67 to 106 (PPPRQKKQAPKQPPKPKKPKTQEKKKKQPAKPKPGKRQRM). Residues 93 to 101 (KQPAKPKPG) form a ribosome-binding region. Residues 114-264 (RLFDVKNEDG…KTTPEGTEEW (151 aa)) form the Peptidase S3 domain. Residues H141, D163, and S215 each act as charge relay system in the active site. A functions as an uncleaved signal peptide for the precursor of protein E3/E2 region spans residues 265–279 (SAAPLVTAMCLLGNV). The N-linked (GlcNAc...) asparagine; by host glycan is linked to N278. A disulfide bridge connects residues C283 and C289. 2 N-linked (GlcNAc...) asparagine; by host glycosylation sites follow: N524 and N646. The helical transmembrane segment at 696–716 (ILAVASATVAMMIGVTVAVLC) threads the bilayer. Residues C724, C744, and C745 are each lipidated (S-palmitoyl cysteine; by host). Helical transmembrane passes span 726–746 (TPYA…LCCV) and 764–784 (NSQP…IVLM).

Belongs to the alphavirus frameshifted structural polyprotein family. Homomultimer. Interacts with host karyopherin KPNA4; this interaction allows the nuclear import of the viral capsid protein. Interacts with spike glycoprotein E2. Interacts with host IRAK1; the interaction leads to inhibition of IRAK1-dependent signaling. As to quaternary structure, the precursor of protein E3/E2 and E1 form a heterodimer shortly after synthesis. In terms of assembly, processing of the precursor of protein E3/E2 into E2 and E3 results in a heterodimer of the spike glycoproteins E2 and E1. Spike at virion surface are constituted of three E2-E1 heterodimers. Specific enzymatic cleavages in vivo yield mature proteins. Capsid protein is auto-cleaved during polyprotein translation, unmasking a signal peptide at the N-terminus of the precursor of E3/E2. The remaining polyprotein is then targeted to the host endoplasmic reticulum, where host signal peptidase cleaves it into pE2 and TF. pE2 is further processed to mature E3 and E2 by host furin in trans-Golgi vesicle. In terms of processing, palmitoylated via thioester bonds. These palmitoylations may induce disruption of the C-terminus transmembrane. This would result in the reorientation of E2 C-terminus from lumenal to cytoplasmic side. Post-translationally, palmitoylated via thioester bonds.

It localises to the virion. The protein localises to the host cytoplasm. Its subcellular location is the host cell membrane. It is found in the host nucleus. The protein resides in the virion membrane. It catalyses the reaction Autocatalytic release of the core protein from the N-terminus of the togavirus structural polyprotein by hydrolysis of a -Trp-|-Ser- bond.. Its function is as follows. Forms an icosahedral capsid with a T=4 symmetry composed of 240 copies of the capsid protein surrounded by a lipid membrane through which penetrate 80 spikes composed of trimers of E1-E2 heterodimers. The capsid protein binds to the viral RNA genome at a site adjacent to a ribosome binding site for viral genome translation following genome release. Possesses a protease activity that results in its autocatalytic cleavage from the nascent structural protein. Following its self-cleavage, the capsid protein transiently associates with ribosomes, and within several minutes the protein binds to viral RNA and rapidly assembles into icosahedric core particles. The resulting nucleocapsid eventually associates with the cytoplasmic domain of the spike glycoprotein E2 at the cell membrane, leading to budding and formation of mature virions. In case of infection, new virions attach to target cells and after clathrin-mediated endocytosis their membrane fuses with the host endosomal membrane. This leads to the release of the nucleocapsid into the cytoplasm, followed by an uncoating event necessary for the genomic RNA to become accessible. The uncoating might be triggered by the interaction of capsid proteins with ribosomes. Binding of ribosomes would release the genomic RNA since the same region is genomic RNA-binding and ribosome-binding. Specifically inhibits interleukin-1 receptor-associated kinase 1/IRAK1-dependent signaling during viral entry, representing a means by which the alphaviruses may evade innate immune detection and activation prior to viral gene expression. Provides the signal sequence for the translocation of the precursor of protein E3/E2 to the host endoplasmic reticulum. Furin-cleaved E3 remains associated with spike glycoprotein E1 and mediates pH protection of the latter during the transport via the secretory pathway. After virion release from the host cell, the assembly protein E3 is gradually released in the extracellular space. In terms of biological role, plays an essential role in viral attachment to target host cell, by binding to the cell receptor. Synthesized as a pE2 precursor which is processed by furin at the cell membrane just before virion budding, giving rise to E2-E1 heterodimer. The pE2-E1 heterodimer is stable, whereas E2-E1 is unstable and dissociate at low pH. pE2 is processed at the last step, presumably to avoid E1 fusion activation before its final export to cell surface. E2 C-terminus contains a transitory transmembrane that would be disrupted by palmitoylation, resulting in reorientation of the C-terminal tail from lumenal to cytoplasmic side. This step is critical since E2 C-terminus is involved in budding by interacting with capsid proteins. This release of E2 C-terminus in cytoplasm occurs lately in protein export, and precludes premature assembly of particles at the endoplasmic reticulum membrane. Functionally, plays a role in viral assembly and release. In Sindbis virus (SINV), this protein is Frameshifted structural polyprotein.